Consider the following 635-residue polypeptide: Arabinoxylan arabinofuranohydrolase (635 aa).

An N-terminal signal peptide occupies residues 1 to 26; sequence MIRKCLVLFLSFALLLSVFPMLNVDA. The active-site Proton acceptor is aspartate 49. The active-site Proton donor is glutamate 248. Substrate is bound at residue asparagine 311. CBM6 domains are found at residues 379–508 and 517–634; these read TRVE…WQFT and TKVE…IEFS. Glutamate 382, glutamate 384, asparagine 406, leucine 407, aspartate 503, glutamate 520, glutamate 522, aspartate 539, tyrosine 544, aspartate 620, tryptophan 624, aspartate 625, and aspartate 629 together coordinate Ca(2+).

Belongs to the glycosyl hydrolase 43 family.

It is found in the secreted. It catalyses the reaction Hydrolysis of terminal non-reducing alpha-L-arabinofuranoside residues in alpha-L-arabinosides.. It functions in the pathway glycan degradation; xylan degradation. Its activity is regulated as follows. Activated by calcium and magnesium. Inhibited by copper. Functionally, cleaves arabinose units from O-2- or O-3-monosubstituted xylose residues, thereby assisting in arabinoxylan (AX) and short-chain arabinoxylo-oligosaccharide (AXOS) degradation. Preferres wheat flour xylan over oat spelt xylan as substrate. Does not display endoxylanase activity. This is Arabinoxylan arabinofuranohydrolase (xynD) from Paenibacillus polymyxa (Bacillus polymyxa).